We begin with the raw amino-acid sequence, 376 residues long: Erythronate-4-phosphate dehydrogenase (376 aa).

The substrate site is built by serine 45 and threonine 67. Residue aspartate 147 participates in NAD(+) binding. Residue arginine 209 is part of the active site. Residue aspartate 233 participates in NAD(+) binding. Glutamate 238 is a catalytic residue. Histidine 255 acts as the Proton donor in catalysis. Position 258 (glycine 258) interacts with NAD(+). Position 259 (tyrosine 259) interacts with substrate.

The protein belongs to the D-isomer specific 2-hydroxyacid dehydrogenase family. PdxB subfamily. Homodimer.

It is found in the cytoplasm. The enzyme catalyses 4-phospho-D-erythronate + NAD(+) = (R)-3-hydroxy-2-oxo-4-phosphooxybutanoate + NADH + H(+). Its pathway is cofactor biosynthesis; pyridoxine 5'-phosphate biosynthesis; pyridoxine 5'-phosphate from D-erythrose 4-phosphate: step 2/5. Its function is as follows. Catalyzes the oxidation of erythronate-4-phosphate to 3-hydroxy-2-oxo-4-phosphonooxybutanoate. This Shewanella baltica (strain OS195) protein is Erythronate-4-phosphate dehydrogenase.